Consider the following 526-residue polypeptide: Alpha-ketoglutaric semialdehyde dehydrogenase (526 aa).

NADP(+)-binding positions include 159–160, 185–188, and 240–241; these read SN, KAHS, and GS. Glu264 (proton acceptor) is an active-site residue. Catalysis depends on Cys301, which acts as the Nucleophile. Glu393 lines the NADP(+) pocket.

The protein belongs to the aldehyde dehydrogenase family.

The enzyme catalyses 2,5-dioxopentanoate + NADP(+) + H2O = 2-oxoglutarate + NADPH + 2 H(+). The protein operates within carbohydrate acid metabolism; D-glucarate degradation. Catalyzes the NAD(P)(+)-dependent oxidation of alpha-ketoglutaric semialdehyde (alphaKGSA) to alpha-ketoglutarate in the D-glutarate degradation pathway. The protein is Alpha-ketoglutaric semialdehyde dehydrogenase of Acinetobacter baylyi (strain ATCC 33305 / BD413 / ADP1).